Here is a 295-residue protein sequence, read N- to C-terminus: Nucleotide-binding protein llmg_1557 (295 aa).

12-19 (GMSGAGKT) is an ATP binding site. 63 to 66 (DMRS) is a GTP binding site.

This sequence belongs to the RapZ-like family.

Displays ATPase and GTPase activities. This is Nucleotide-binding protein llmg_1557 from Lactococcus lactis subsp. cremoris (strain MG1363).